Reading from the N-terminus, the 461-residue chain is Bifunctional protein GlmU (461 aa).

Residues 1–243 (MNATVPSAAP…EDELRGINSR (243 aa)) form a pyrophosphorylase region. UDP-N-acetyl-alpha-D-glucosamine-binding positions include 24-27 (LAAG), Lys38, Gln86, 91-92 (GT), 112-114 (YGD), Gly155, Glu169, Asn184, and Asn241. Asp114 provides a ligand contact to Mg(2+). Asn241 is a Mg(2+) binding site. Residues 244 to 264 (AELAEAEACVQRRLRAAALDG) are linker. The segment at 265 to 461 (GATLVAPETV…AALRRKKEQG (197 aa)) is N-acetyltransferase. Arg330 and Lys348 together coordinate UDP-N-acetyl-alpha-D-glucosamine. The active-site Proton acceptor is the His360. UDP-N-acetyl-alpha-D-glucosamine is bound by residues Tyr363 and Asn374. Residues Ala377, 383–384 (NY), Ser402, Ala420, and Arg437 each bind acetyl-CoA.

The protein in the N-terminal section; belongs to the N-acetylglucosamine-1-phosphate uridyltransferase family. In the C-terminal section; belongs to the transferase hexapeptide repeat family. In terms of assembly, homotrimer. Mg(2+) is required as a cofactor.

Its subcellular location is the cytoplasm. The catalysed reaction is alpha-D-glucosamine 1-phosphate + acetyl-CoA = N-acetyl-alpha-D-glucosamine 1-phosphate + CoA + H(+). The enzyme catalyses N-acetyl-alpha-D-glucosamine 1-phosphate + UTP + H(+) = UDP-N-acetyl-alpha-D-glucosamine + diphosphate. It participates in nucleotide-sugar biosynthesis; UDP-N-acetyl-alpha-D-glucosamine biosynthesis; N-acetyl-alpha-D-glucosamine 1-phosphate from alpha-D-glucosamine 6-phosphate (route II): step 2/2. It functions in the pathway nucleotide-sugar biosynthesis; UDP-N-acetyl-alpha-D-glucosamine biosynthesis; UDP-N-acetyl-alpha-D-glucosamine from N-acetyl-alpha-D-glucosamine 1-phosphate: step 1/1. Its pathway is bacterial outer membrane biogenesis; LPS lipid A biosynthesis. Functionally, catalyzes the last two sequential reactions in the de novo biosynthetic pathway for UDP-N-acetylglucosamine (UDP-GlcNAc). The C-terminal domain catalyzes the transfer of acetyl group from acetyl coenzyme A to glucosamine-1-phosphate (GlcN-1-P) to produce N-acetylglucosamine-1-phosphate (GlcNAc-1-P), which is converted into UDP-GlcNAc by the transfer of uridine 5-monophosphate (from uridine 5-triphosphate), a reaction catalyzed by the N-terminal domain. This chain is Bifunctional protein GlmU, found in Gluconacetobacter diazotrophicus (strain ATCC 49037 / DSM 5601 / CCUG 37298 / CIP 103539 / LMG 7603 / PAl5).